The chain runs to 114 residues: Iron-sulfur cluster insertion protein ErpA (114 aa).

The iron-sulfur cluster site is built by Cys42, Cys106, and Cys108.

The protein belongs to the HesB/IscA family. In terms of assembly, homodimer. The cofactor is iron-sulfur cluster.

Required for insertion of 4Fe-4S clusters for at least IspG. This is Iron-sulfur cluster insertion protein ErpA from Pasteurella multocida (strain Pm70).